The chain runs to 152 residues: Xanthine-guanine phosphoribosyltransferase (152 aa).

Residues Arg37–Gly38, Arg69, and Asp88–Thr96 contribute to the 5-phospho-alpha-D-ribose 1-diphosphate site. Arg69 provides a ligand contact to GMP. A Mg(2+)-binding site is contributed by Asp89. Asp92 and Ile135 together coordinate guanine. Residues Asp92 and Ile135 each contribute to the xanthine site. GMP-binding positions include Asp92–Thr96 and Trp134–Ile135.

It belongs to the purine/pyrimidine phosphoribosyltransferase family. XGPT subfamily. In terms of assembly, homotetramer. Requires Mg(2+) as cofactor.

Its subcellular location is the cell inner membrane. It catalyses the reaction GMP + diphosphate = guanine + 5-phospho-alpha-D-ribose 1-diphosphate. The catalysed reaction is XMP + diphosphate = xanthine + 5-phospho-alpha-D-ribose 1-diphosphate. It carries out the reaction IMP + diphosphate = hypoxanthine + 5-phospho-alpha-D-ribose 1-diphosphate. The protein operates within purine metabolism; GMP biosynthesis via salvage pathway; GMP from guanine: step 1/1. Its pathway is purine metabolism; XMP biosynthesis via salvage pathway; XMP from xanthine: step 1/1. In terms of biological role, purine salvage pathway enzyme that catalyzes the transfer of the ribosyl-5-phosphate group from 5-phospho-alpha-D-ribose 1-diphosphate (PRPP) to the N9 position of the 6-oxopurines guanine and xanthine to form the corresponding ribonucleotides GMP (guanosine 5'-monophosphate) and XMP (xanthosine 5'-monophosphate), with the release of PPi. To a lesser extent, also acts on hypoxanthine. The protein is Xanthine-guanine phosphoribosyltransferase of Aliivibrio fischeri (strain ATCC 700601 / ES114) (Vibrio fischeri).